The sequence spans 273 residues: 4-hydroxy-tetrahydrodipicolinate reductase (273 aa).

NAD(+) contacts are provided by residues 12–17 and glutamate 38; that span reads GAGGRM. Arginine 39 provides a ligand contact to NADP(+). Residues 102-104 and 126-129 contribute to the NAD(+) site; these read GTT and AANF. Histidine 159 functions as the Proton donor/acceptor in the catalytic mechanism. Residue histidine 160 participates in (S)-2,3,4,5-tetrahydrodipicolinate binding. The active-site Proton donor is the lysine 163. 169–170 serves as a coordination point for (S)-2,3,4,5-tetrahydrodipicolinate; the sequence is GT.

This sequence belongs to the DapB family. As to quaternary structure, homotetramer.

The protein resides in the cytoplasm. The catalysed reaction is (S)-2,3,4,5-tetrahydrodipicolinate + NAD(+) + H2O = (2S,4S)-4-hydroxy-2,3,4,5-tetrahydrodipicolinate + NADH + H(+). The enzyme catalyses (S)-2,3,4,5-tetrahydrodipicolinate + NADP(+) + H2O = (2S,4S)-4-hydroxy-2,3,4,5-tetrahydrodipicolinate + NADPH + H(+). Its pathway is amino-acid biosynthesis; L-lysine biosynthesis via DAP pathway; (S)-tetrahydrodipicolinate from L-aspartate: step 4/4. Functionally, catalyzes the conversion of 4-hydroxy-tetrahydrodipicolinate (HTPA) to tetrahydrodipicolinate. In Escherichia coli O127:H6 (strain E2348/69 / EPEC), this protein is 4-hydroxy-tetrahydrodipicolinate reductase.